The chain runs to 114 residues: Early 4 ORF4 protein (114 aa).

The Nuclear localization signal signature appears at 66–75; it reads RAKRRDRRRR.

Belongs to the adenoviridae E4 ORF4 family. Interacts with host BAZ1A/ACF1, host PPP2R2A/PP2a-B55alpha subunit, and host PPP2R5E/PP2a-B'B56 subunit. May interact with host SRC. May be phosphorylated by host SRC kinase.

The protein resides in the host nucleus. It is found in the host cytoplasm. Plays a role in viral alternative pre-mRNA splicing. Activates dephosphorylation by protein phosphatase 2A of host SR proteins and converts their splicing properties. When expressed alone ex vivo, induces p53/TP53-independent apoptosis called cytoplasmic death. May mimic nutrient/growth signals to activate the host mTOR pathway. This Homo sapiens (Human) protein is Early 4 ORF4 protein.